A 1601-amino-acid chain; its full sequence is MSEELKVVLRRSEQHSGFGFSLLGTTGPPHVIYDIVENSPAADCGAVEAGDVILKVNGTDVHRYTTKEVLKCLRLSEQLVTLELKRDPKLKARIKEQLANTQSPHYVDIESPNIYDYHSSSTNSSPNHRPNAGGKGAATTPSQTGLRYKSPTHLPSLRQNSSPLLASGSTTTTTTATHTHSHSRNSSASSTKIKVVETSITTSTTNVVGLTSPTGSVGGGVGGEATSPTFRPSRIPQALTKCAVPKPVPVLHSPQNKRPRPSQIPTKAANGNGNGHTAHLPPQSLQHSNSYSGSPVTRQRFADREPEREPEPNSAPPQPAKAPRFEAYMMTGDLILNLSRTPQTSNPLPAQAKKIDSLRDSPSRLVNPRINGALAPRASGESSPTSSSSVDSPTNTSSDSVKREAKLLQKQQQQQQQTYQQQQQRDSINNSYNRKDSLTNDTLLMCEELEPDEEGEYVLEEDNKQQRQRQQQQRYRQQQNQQRYEYYQNEDELEEQEEVEEEREEDQTHYDITNIETYQSGVGRGDDDDSDRQCLVDDDDDDDAYDDEENDAGDEDYSTNSLGSGSAKQRLRALKQRTATRQQQRNRDAVDCAGRSGSGSSSTTVKSEAGGLGLDETSFSVPTSPISLSTPLIDKETANSVPTSPEPSSLVPESSSGAGAGAVVVRRHNGHVVRKCDAAGFRTSKSEDHLQQIQREGIAAVIPIDIDEDVNSSLNTLLDTRQDSEDSQSMATVIVNNSSLASNNNEGEQTDNRSSSSSSNSSDNNNCSSNTGEPATSETATATATIITATSTRTMNCSSKLNYILCKKASDRDRIVWTYNAPLQPHQLAALQRQQQQQEQQFQQQQQQLHQQHLQQQQQLQQQHQQQQQQQQQQQQQQLYGQQSHSNSHSSSISSSPQHSAVGSPASPTSVSSSVMSSSGSKGALGLGSSSNGPMAAVQQQQLREREQGGQVAQPPSGIPGLLSCPGGGCGNNGGGGGIGGGGNNDQSVSEAISNISSPDYQDDDNLLSSRDILGGMVLSDPSDSDSTILVSDAAAHQRQQLKQQLRAQQQQQRERERDRDRDREQSEHKVVIQVRGLDSNSSGGNGTNGRSEEDVVTLTDEPLGTMTVGMRDASPPVSDDGSDVESLHSYHYSPKAVDMPSAIRLAKRLHSLDGFKKSDVSRHLSKNNDFSRAVADEYLKHFTFEKKSLDQALREFLQQFSLSGETQERERVLVHFSKRFLDCNPGTFNSQDAVHTLTCAIMLLNTDLHGQNINRKMSCAEFVDNLADLNDGENFPKDVLKSLYQAIKTKPLEWALDEEAGDLQQQRANNSALGNVGLNPFLDPPELATAVEYKKGYVMRKCCYDSSFKKTPFGKRSWKMFYCTLRDLVLYLHKDEHGFRKSQMSDNLHNAIRIHHALATKANDYTKKQHVFRLQTADQAEYLFQTSDSKELQSWVETINYVCAAISAPPLEGGVGSQKRFQRPLLPSKQSKLMLKEQLDSHEVQLAQLDQELNEHKKGPIPSKGLALQNYKEKESYLQYELRRYRTYVSILSAKMLADQQQLELQAQQPSPASHEEEADTFPVGTTACTPPTPQSINQKDQQKEQQQQQPTNRKEKKKK.

The interval 1 to 340 (MSEELKVVLR…TGDLILNLSR (340 aa)) is mediates regulation of axon branching and microtubule organization. The PDZ domain maps to 6-88 (KVVLRRSEQH…LVTLELKRDP (83 aa)). Disordered stretches follow at residues 113–192 (NIYD…SSTK), 211–322 (TSPT…PAKA), 339–440 (SRTP…SLTN), 459–657 (LEED…SSSG), 737–780 (NSSL…SETA), 872–965 (QQQQ…LLSC), and 1040–1126 (QQLK…SDVE). The span at 118–128 (HSSSTNSSPNH) shows a compositional bias: polar residues. The span at 166-191 (ASGSTTTTTTATHTHSHSRNSSASST) shows a compositional bias: low complexity. A compositionally biased stretch (polar residues) spans 283–297 (QSLQHSNSYSGSPVT). Residues 300–311 (RFADREPEREPE) show a composition bias toward basic and acidic residues. The Microtubule elimination domain (MTED); Binds tubulin and blocks microtubule polymerization motif lies at 323–340 (PRFEAYMMTGDLILNLSR). The span at 339-348 (SRTPQTSNPL) shows a compositional bias: polar residues. A compositionally biased stretch (basic and acidic residues) spans 353–362 (KKIDSLRDSP). Low complexity-rich tracts occupy residues 382–399 (SSPT…TSSD), 409–424 (QKQQ…QQQQ), and 468–487 (QRQQ…YEYY). A compositionally biased stretch (acidic residues) spans 488 to 505 (QNEDELEEQEEVEEEREE). The span at 510–519 (YDITNIETYQ) shows a compositional bias: polar residues. Over residues 526–557 (DDDDSDRQCLVDDDDDDDAYDDEENDAGDEDY) the composition is skewed to acidic residues. Polar residues-rich tracts occupy residues 558-567 (STNSLGSGSA) and 617-630 (TSFS…SLST). The span at 640–657 (SVPTSPEPSSLVPESSSG) shows a compositional bias: low complexity. A compositionally biased stretch (polar residues) spans 737–747 (NSSLASNNNEG). 4 stretches are compositionally biased toward low complexity: residues 752–780 (NRSS…SETA), 872–942 (QQQQ…QQQQ), 949–965 (GGQV…LLSC), and 1040–1052 (QQLK…QQQQ). Residues 894–1601 (SSSPQHSAVG…PTNRKEKKKK (708 aa)) form a mediates association to the membrane and rescricts the microtubule-inhibiting activity to the cell cortex region. A compositionally biased stretch (basic and acidic residues) spans 1053–1071 (QRERERDRDRDREQSEHKV). An SEC7 domain is found at 1125-1291 (VESLHSYHYS…KSLYQAIKTK (167 aa)). Residues 1332-1445 (VEYKKGYVMR…WVETINYVCA (114 aa)) enclose the PH domain. The disordered stretch occupies residues 1544–1601 (LELQAQQPSPASHEEEADTFPVGTTACTPPTPQSINQKDQQKEQQQQQPTNRKEKKKK). A compositionally biased stretch (polar residues) spans 1568–1579 (TACTPPTPQSIN).

The protein belongs to the PSD family. In terms of assembly, interacts (via MTED motif) with tubulin. Expressed in the head (at protein level).

It is found in the cell projection. Its subcellular location is the axon. The protein resides in the cytoplasm. It localises to the cell membrane. The protein localises to the cell cortex. In terms of biological role, guanine nucleotide exchange factor for Arf6. Regulates axon growth and branching by inhibiting microtubule polymerisation at the cortex. Together with shot, promotes axonal microtubule bundle integrity. Required for normal ethanol-induced tolerance and preference. Probably by activating Arf6, counteracts ethanol-induced sedation. The protein is PH and SEC7 domain-containing protein of Drosophila melanogaster (Fruit fly).